A 426-amino-acid polypeptide reads, in one-letter code: Glutamate-1-semialdehyde 2,1-aminomutase (426 aa).

Lysine 265 is subject to N6-(pyridoxal phosphate)lysine.

This sequence belongs to the class-III pyridoxal-phosphate-dependent aminotransferase family. HemL subfamily. As to quaternary structure, homodimer. The cofactor is pyridoxal 5'-phosphate.

It localises to the cytoplasm. It carries out the reaction (S)-4-amino-5-oxopentanoate = 5-aminolevulinate. The protein operates within porphyrin-containing compound metabolism; protoporphyrin-IX biosynthesis; 5-aminolevulinate from L-glutamyl-tRNA(Glu): step 2/2. This is Glutamate-1-semialdehyde 2,1-aminomutase from Pectobacterium carotovorum subsp. carotovorum (strain PC1).